A 394-amino-acid polypeptide reads, in one-letter code: Chalcone synthase 8 (394 aa).

Cysteine 165 is an active-site residue.

This sequence belongs to the thiolase-like superfamily. Chalcone/stilbene synthases family.

The enzyme catalyses (E)-4-coumaroyl-CoA + 3 malonyl-CoA + 3 H(+) = 2',4,4',6'-tetrahydroxychalcone + 3 CO2 + 4 CoA. It participates in secondary metabolite biosynthesis; flavonoid biosynthesis. The primary product of this enzyme is 4,2',4',6'-tetrahydroxychalcone (also termed naringenin-chalcone or chalcone) which can under specific conditions spontaneously isomerize into naringenin. This chain is Chalcone synthase 8 (CHS8), found in Bromheadia finlaysoniana (Orchid).